A 1338-amino-acid chain; its full sequence is Insulin receptor substrate 2 (1338 aa).

The span at 1–12 (MASPPRHGPPGP) shows a compositional bias: pro residues. Disordered stretches follow at residues 1–31 (MASPPRHGPPGPASGDGPNLNNNNNNNNHSV) and 49–72 (VLRGPGAGGDEATAGGGSAPQPPR). One can recognise a PH domain in the interval 16–144 (DGPNLNNNNN…WYRALTDLVS (129 aa)). Low complexity predominate over residues 19 to 28 (NLNNNNNNNN). A compositionally biased stretch (gly residues) spans 53–66 (PGAGGDEATAGGGS). An IRS-type PTB domain is found at 194 to 298 (YREVWQVNLK…EAMKALKELF (105 aa)). The disordered stretch occupies residues 303 to 411 (RSKSQSSGSS…SHTLSGGCGG (109 aa)). A phosphoserine mark is found at S306 and S346. The residue at position 350 (T350) is a Phosphothreonine. S365, S384, S388, and S391 each carry phosphoserine. The residue at position 412 (R412) is an Omega-N-methylarginine. Residues 428–537 (SRSMSMPVAH…PPARDGGGGG (110 aa)) form a disordered region. Residues 444 to 453 (SPGSLSSSSG) show a composition bias toward low complexity. Over residues 459–471 (YPPPPGPHPPLPH) the composition is skewed to pro residues. Over residues 475-493 (HGPGQRPSSGSASASGSPS) the composition is skewed to low complexity. T520 carries the post-translational modification Phosphothreonine. Phosphoserine is present on S523. T527 carries the post-translational modification Phosphothreonine. Y540 carries the post-translational modification Phosphotyrosine; by INSR. Residues 540–543 (YGYM) carry the YXXM motif 1 motif. Phosphoserine; by PLK1 is present on S560. At S577 the chain carries Phosphoserine. Residues T579 and T580 each carry the phosphothreonine modification. S594 is modified (phosphoserine). A YXXM motif 2 motif is present at residues 598 to 601 (YTLM). S608 and S620 each carry phosphoserine. 2 positions are modified to phosphotyrosine; by INSR: Y653 and Y675. 2 consecutive short sequence motifs (YXXM motif) follow at residues 653-656 (YMPM) and 675-678 (YMPM). Residues S679 and S682 each carry the phosphoserine modification. Low complexity predominate over residues 703-719 (PSAGPAGPAPTSAAGRT). The disordered stretch occupies residues 703-739 (PSAGPAGPAPTSAAGRTFPASGGGYKASSPAESSPED). 2 positions are modified to phosphoserine: S735 and S736. The short motif at 742–745 (YMRM) is the YXXM motif 5 element. S770 carries the phosphoserine modification. T779 carries the phosphothreonine modification. Position 805 is a phosphoserine (S805). Residues 823 to 826 (YVLM) carry the YXXM motif 6 motif. S828 carries the phosphoserine modification. The tract at residues 840–1101 (EPQATPGPSQ…KPEAARVASP (262 aa)) is disordered. Residues 859 to 870 (TQPPHPVVPSPV) are compositionally biased toward pro residues. The residue at position 915 (S915) is a Phosphoserine. Y919 carries the phosphotyrosine; by INSR modification. Over residues 938 to 967 (LLASAASSSSLLSASSPASSLGSGTPGTSS) the composition is skewed to low complexity. S973 is modified (phosphoserine). A Phosphotyrosine; by INSR modification is found at Y978. Residues 1013-1022 (PYPPLPPRPS) show a composition bias toward pro residues. Residues 1072–1075 (YTEM) carry the YXXM motif 7 motif. Phosphothreonine is present on T1082. Residues 1083 to 1093 (PPQPIAAPPKP) show a composition bias toward pro residues. S1100 carries the post-translational modification Phosphoserine. The residue at position 1109 (S1109) is a Phosphoserine; by PLK1. A disordered region spans residues 1121-1296 (LQASQPPDPH…TRSLGGLISA (176 aa)). Low complexity predominate over residues 1150-1165 (ETFSSTTTVTPVSPSF). A Phosphothreonine modification is found at T1159. Residues S1162, S1174, S1176, and S1186 each carry the phosphoserine modification. A compositionally biased stretch (polar residues) spans 1174 to 1183 (SASVENVSLR). The span at 1188-1198 (GGVGVGPGGGD) shows a compositional bias: gly residues. A Phosphoserine modification is found at S1203. The span at 1224–1236 (QPGGLVGCPGSGG) shows a compositional bias: gly residues. A Phosphotyrosine; by INSR modification is found at Y1253. Residues 1263 to 1277 (GLPPQPQPPPPPLPQ) are compositionally biased toward pro residues. Residue K1331 forms a Glycyl lysine isopeptide (Lys-Gly) (interchain with G-Cter in ubiquitin) linkage.

In terms of assembly, interacts with PHIP. Interacts with SH2B1; this interaction enhances leptin-induced activation of the PI3-kinase pathway. Interacts with GRB2. Interacts with PIK3R1. Interacts with DVL2; this interaction promotes the Wnt/beta-catenin signaling pathway. Post-translationally, phosphorylation fluctuates in a cell-cycle dependent manner with hyperphosphorylation during mitosis. Phosphorylated at Ser-560 and Ser-1109 by PLK1; these phosphorylations prevent the activation of the PI3K pathway upon growth factor stimulation by inhibiting the binding between IRS2 and the PI3K pathway components and increasing the level of IRS2 protein degradation. In addition, they prevent premature mitotic exit. In terms of processing, monoubiquitinated by NEDD4; leading to enhanced IGF1 signaling. During cell cycle, ubiquitination and proteasomal degradation are controlled by FZR1.

Its subcellular location is the cytoplasm. It localises to the cytosol. Its function is as follows. Signaling adapter protein that participates in the signal transduction from two prominent receptor tyrosine kinases, insulin receptor/INSR and insulin-like growth factor I receptor/IGF1R. Plays therefore an important role in development, growth, glucose homeostasis as well as lipid metabolism. Upon phosphorylation by the insulin receptor, functions as a signaling scaffold that propagates insulin action through binding to SH2 domain-containing proteins including the p85 regulatory subunit of PI3K, NCK1, NCK2, GRB2 or SHP2. Recruitment of GRB2 leads to the activation of the guanine nucleotide exchange factor SOS1 which in turn triggers the Ras/Raf/MEK/MAPK signaling cascade. Activation of the PI3K/AKT pathway is responsible for most of insulin metabolic effects in the cell, and the Ras/Raf/MEK/MAPK is involved in the regulation of gene expression and in cooperation with the PI3K pathway regulates cell growth and differentiation. Acts a positive regulator of the Wnt/beta-catenin signaling pathway through suppression of DVL2 autophagy-mediated degradation leading to cell proliferation. Plays a role in cell cycle progression by promoting a robust spindle assembly checkpoint (SAC) during M-phase. In macrophages, IL4-induced tyrosine phosphorylation of IRS2 leads to the recruitment and activation of phosphoinositide 3-kinase (PI3K). The polypeptide is Insulin receptor substrate 2 (IRS2) (Homo sapiens (Human)).